Here is a 716-residue protein sequence, read N- to C-terminus: 1,4-alpha-glucan branching enzyme GlgB (716 aa).

Asp-398 serves as the catalytic Nucleophile. Glu-451 (proton donor) is an active-site residue.

Belongs to the glycosyl hydrolase 13 family. GlgB subfamily. As to quaternary structure, monomer.

The enzyme catalyses Transfers a segment of a (1-&gt;4)-alpha-D-glucan chain to a primary hydroxy group in a similar glucan chain.. The protein operates within glycan biosynthesis; glycogen biosynthesis. In terms of biological role, catalyzes the formation of the alpha-1,6-glucosidic linkages in glycogen by scission of a 1,4-alpha-linked oligosaccharide from growing alpha-1,4-glucan chains and the subsequent attachment of the oligosaccharide to the alpha-1,6 position. The polypeptide is 1,4-alpha-glucan branching enzyme GlgB (Nitrobacter hamburgensis (strain DSM 10229 / NCIMB 13809 / X14)).